The chain runs to 216 residues: Cytidylate kinase (216 aa).

11-19 is a binding site for ATP; it reads GPAGAGKGT.

It belongs to the cytidylate kinase family. Type 1 subfamily.

Its subcellular location is the cytoplasm. The catalysed reaction is CMP + ATP = CDP + ADP. The enzyme catalyses dCMP + ATP = dCDP + ADP. This Mesorhizobium japonicum (strain LMG 29417 / CECT 9101 / MAFF 303099) (Mesorhizobium loti (strain MAFF 303099)) protein is Cytidylate kinase.